A 381-amino-acid polypeptide reads, in one-letter code: Probable tRNA sulfurtransferase (381 aa).

A THUMP domain is found at 60–168 (REATEVLTRV…EGKAYIFVDK (109 aa)). Residues 186 to 187 (LL), K269, G291, and Q300 contribute to the ATP site.

It belongs to the ThiI family.

It is found in the cytoplasm. It carries out the reaction [ThiI sulfur-carrier protein]-S-sulfanyl-L-cysteine + a uridine in tRNA + 2 reduced [2Fe-2S]-[ferredoxin] + ATP + H(+) = [ThiI sulfur-carrier protein]-L-cysteine + a 4-thiouridine in tRNA + 2 oxidized [2Fe-2S]-[ferredoxin] + AMP + diphosphate. The enzyme catalyses [ThiS sulfur-carrier protein]-C-terminal Gly-Gly-AMP + S-sulfanyl-L-cysteinyl-[cysteine desulfurase] + AH2 = [ThiS sulfur-carrier protein]-C-terminal-Gly-aminoethanethioate + L-cysteinyl-[cysteine desulfurase] + A + AMP + 2 H(+). The protein operates within cofactor biosynthesis; thiamine diphosphate biosynthesis. Catalyzes the ATP-dependent transfer of a sulfur to tRNA to produce 4-thiouridine in position 8 of tRNAs, which functions as a near-UV photosensor. Also catalyzes the transfer of sulfur to the sulfur carrier protein ThiS, forming ThiS-thiocarboxylate. This is a step in the synthesis of thiazole, in the thiamine biosynthesis pathway. The sulfur is donated as persulfide by IscS. The chain is Probable tRNA sulfurtransferase from Thermococcus kodakarensis (strain ATCC BAA-918 / JCM 12380 / KOD1) (Pyrococcus kodakaraensis (strain KOD1)).